We begin with the raw amino-acid sequence, 393 residues long: Formate-dependent phosphoribosylglycinamide formyltransferase (393 aa).

N(1)-(5-phospho-beta-D-ribosyl)glycinamide contacts are provided by residues 22–23 and glutamate 82; that span reads EL. ATP contacts are provided by residues arginine 114, lysine 155, 160-165, 195-198, and glutamate 203; these read SSGKGQ and EGFI. Positions 119 to 308 constitute an ATP-grasp domain; the sequence is RLAAEELDLP…QFALHARAIL (190 aa). Residues glutamate 267 and glutamate 279 each contribute to the Mg(2+) site. Residues aspartate 286, lysine 356, and 363 to 364 each bind N(1)-(5-phospho-beta-D-ribosyl)glycinamide; that span reads RR.

This sequence belongs to the PurK/PurT family. Homodimer.

The catalysed reaction is N(1)-(5-phospho-beta-D-ribosyl)glycinamide + formate + ATP = N(2)-formyl-N(1)-(5-phospho-beta-D-ribosyl)glycinamide + ADP + phosphate + H(+). It participates in purine metabolism; IMP biosynthesis via de novo pathway; N(2)-formyl-N(1)-(5-phospho-D-ribosyl)glycinamide from N(1)-(5-phospho-D-ribosyl)glycinamide (formate route): step 1/1. Its function is as follows. Involved in the de novo purine biosynthesis. Catalyzes the transfer of formate to 5-phospho-ribosyl-glycinamide (GAR), producing 5-phospho-ribosyl-N-formylglycinamide (FGAR). Formate is provided by PurU via hydrolysis of 10-formyl-tetrahydrofolate. This is Formate-dependent phosphoribosylglycinamide formyltransferase from Pseudomonas fluorescens (strain ATCC BAA-477 / NRRL B-23932 / Pf-5).